The following is a 547-amino-acid chain: Chaperonin GroEL 1 (547 aa).

Residues threonine 29–proline 32, aspartate 86–threonine 90, glycine 418, asparagine 482–alanine 484, and aspartate 498 each bind ATP.

This sequence belongs to the chaperonin (HSP60) family. Forms a cylinder of 14 subunits composed of two heptameric rings stacked back-to-back. Interacts with the co-chaperonin GroES.

It is found in the cytoplasm. It carries out the reaction ATP + H2O + a folded polypeptide = ADP + phosphate + an unfolded polypeptide.. Its function is as follows. Together with its co-chaperonin GroES, plays an essential role in assisting protein folding. The GroEL-GroES system forms a nano-cage that allows encapsulation of the non-native substrate proteins and provides a physical environment optimized to promote and accelerate protein folding. The polypeptide is Chaperonin GroEL 1 (Corynebacterium jeikeium (strain K411)).